Here is a 74-residue protein sequence, read N- to C-terminus: Putative antitoxin VapB48 (74 aa).

Its function is as follows. Possibly the antitoxin component of a type II toxin-antitoxin (TA) system. Its cognate toxin is VapC48 (Potential). The protein is Putative antitoxin VapB48 (vapB48) of Mycobacterium tuberculosis (strain CDC 1551 / Oshkosh).